The sequence spans 186 residues: Ribosome-recycling factor (186 aa).

This sequence belongs to the RRF family.

The protein localises to the cytoplasm. Responsible for the release of ribosomes from messenger RNA at the termination of protein biosynthesis. May increase the efficiency of translation by recycling ribosomes from one round of translation to another. This is Ribosome-recycling factor from Rickettsia bellii (strain OSU 85-389).